The primary structure comprises 494 residues: Cytochrome P450 2A6 (494 aa).

Substrate-binding residues include F107 and N297. C439 contributes to the heme binding site.

It belongs to the cytochrome P450 family. Heme is required as a cofactor. Liver.

It localises to the endoplasmic reticulum membrane. It is found in the microsome membrane. It catalyses the reaction 1,4-cineole + reduced [NADPH--hemoprotein reductase] + O2 = 2-exo-hydroxy-1,4-cineole + oxidized [NADPH--hemoprotein reductase] + H2O + H(+). Its function is as follows. Exhibits a high coumarin 7-hydroxylase activity. Can act in the hydroxylation of the anti-cancer drugs cyclophosphamide and ifosphamide. Competent in the metabolic activation of aflatoxin B1. Constitutes the major nicotine C-oxidase. Acts as a 1,4-cineole 2-exo-monooxygenase. Possesses low phenacetin O-deethylation activity. The sequence is that of Cytochrome P450 2A6 (CYP2A6) from Homo sapiens (Human).